We begin with the raw amino-acid sequence, 847 residues long: Alanine--tRNA ligase (847 aa).

Histidine 554, histidine 558, cysteine 656, and histidine 660 together coordinate Zn(2+).

The protein belongs to the class-II aminoacyl-tRNA synthetase family. Zn(2+) is required as a cofactor.

Its subcellular location is the cytoplasm. The enzyme catalyses tRNA(Ala) + L-alanine + ATP = L-alanyl-tRNA(Ala) + AMP + diphosphate. In terms of biological role, catalyzes the attachment of alanine to tRNA(Ala) in a two-step reaction: alanine is first activated by ATP to form Ala-AMP and then transferred to the acceptor end of tRNA(Ala). Also edits incorrectly charged Ser-tRNA(Ala) and Gly-tRNA(Ala) via its editing domain. The protein is Alanine--tRNA ligase of Helicobacter pylori (strain HPAG1).